Reading from the N-terminus, the 294-residue chain is Elongation factor Ts (294 aa).

Residues 78-81 (TDFV) are involved in Mg(2+) ion dislocation from EF-Tu.

Belongs to the EF-Ts family.

It is found in the cytoplasm. In terms of biological role, associates with the EF-Tu.GDP complex and induces the exchange of GDP to GTP. It remains bound to the aminoacyl-tRNA.EF-Tu.GTP complex up to the GTP hydrolysis stage on the ribosome. The polypeptide is Elongation factor Ts (Mycoplasma mobile (strain ATCC 43663 / 163K / NCTC 11711) (Mesomycoplasma mobile)).